We begin with the raw amino-acid sequence, 154 residues long: Ribosome maturation factor RimP (154 aa).

This sequence belongs to the RimP family.

The protein localises to the cytoplasm. Required for maturation of 30S ribosomal subunits. The sequence is that of Ribosome maturation factor RimP from Ruthia magnifica subsp. Calyptogena magnifica.